A 354-amino-acid polypeptide reads, in one-letter code: Probable L-ascorbate-6-phosphate lactonase UlaG (354 aa).

The protein belongs to the UlaG family. Requires a divalent metal cation as cofactor.

It is found in the cytoplasm. It catalyses the reaction L-ascorbate 6-phosphate + H2O = 3-dehydro-L-gulonate 6-phosphate. It participates in cofactor degradation; L-ascorbate degradation; D-xylulose 5-phosphate from L-ascorbate: step 1/4. Probably catalyzes the hydrolysis of L-ascorbate-6-P into 3-keto-L-gulonate-6-P. Is essential for L-ascorbate utilization under anaerobic conditions. This Shigella flexneri protein is Probable L-ascorbate-6-phosphate lactonase UlaG.